Consider the following 410-residue polypeptide: Lipid droplet-regulating VLDL assembly factor AUP1 (410 aa).

Methionine 1 carries the post-translational modification N-acetylmethionine. Residues 1-20 (MELPSGPGPERLFDSHRLPG) are Cytoplasmic-facing. Serine 5 carries the post-translational modification Phosphoserine. Residues 21–41 (DCFLLLVLLLYAPVGFCLLVL) lie within the membrane without spanning it. Residues 42-410 (RLFLGIHVFL…FTERRAQEAD (369 aa)) are Cytoplasmic-facing. A disordered region spans residues 255-295 (TGTRLTPADKAEHMKRQRHPRLRPQSAQSSFPPSPGPSPDV). A phosphoserine mark is found at serine 288 and serine 292. Positions 296–338 (QLATLAQRVKEVLPHVPLGVIQRDLAKTGCVDLTITNLLEGAV) constitute a CUE domain. A disordered region spans residues 350–369 (QSLPTASASKFPSSGPVTPQ). Serine 363 bears the Phosphoserine mark. The residue at position 367 (threonine 367) is a Phosphothreonine.

Belongs to the AUP1 family. As to quaternary structure, identified in a complex that contains SEL1L, OS9, FAF2/UBXD8, UBE2J1/UBC6E and AUP1. Interacts with the cytoplasmic tail of ITGA2B, ITGA1, ITGA2, ITGA5, ITGAV and ITGAM. Interacts (via C-terminus) with ubiquitin-conjugating enzyme UBE2G2; the interaction recruits UBE2G2 to lipid droplets. Interacts with ubiquitin ligases AMFR/gp78 and RNF139/TRC8; this promotes interaction of UBE2G2 with AMFR and RNF139. Interacts with apolipoprotein APOB. In terms of assembly, (Microbial infection) Interacts with Dengue virus NS4A; the interaction occurs in the presence of Dengue virus NS4B and induces lipophagy which facilitates production of virus progeny. Post-translationally, monoubiquitinated and diubiquitinated. (Microbial infection) Not ubiquitinated following Dengue virus infection. Detected in blood platelets and leukocytes (at protein level). Ubiquitous. Highly expressed in placenta, liver, kidney, skeletal muscle, heart and brain.

It localises to the endoplasmic reticulum membrane. It is found in the lipid droplet. Its subcellular location is the cytoplasmic vesicle. The protein resides in the autophagosome. In terms of biological role, plays a role in the translocation of terminally misfolded proteins from the endoplasmic reticulum lumen to the cytoplasm and their degradation by the proteasome. Plays a role in lipid droplet formation. Induces lipid droplet clustering. Recruits ubiquitin-conjugating enzyme UBE2G2 to lipid droplets which facilitates its interaction with ubiquitin ligases AMFR/gp78 and RNF139/TRC8, leading to sterol-induced ubiquitination of HMGCR and its subsequent proteasomal degradation. Also required for the degradation of INSIG1, SREBF1 and SREBF2. Plays a role in regulating assembly and secretion of very low density lipoprotein particles and stability of apolipoprotein APOB. Functionally, (Microbial infection) Following Dengue virus infection, required for induction of lipophagy which facilitates production of virus progeny particles. In Homo sapiens (Human), this protein is Lipid droplet-regulating VLDL assembly factor AUP1.